The following is a 205-amino-acid chain: High frequency lysogenization protein HflD homolog (205 aa).

This sequence belongs to the HflD family.

It localises to the cytoplasm. The protein resides in the cell inner membrane. The polypeptide is High frequency lysogenization protein HflD homolog (Hahella chejuensis (strain KCTC 2396)).